A 510-amino-acid polypeptide reads, in one-letter code: Chromosomal replication initiator protein DnaA (510 aa).

The domain I, interacts with DnaA modulators stretch occupies residues 1–87 (MSVELWQQCV…IGSRRSSAPR (87 aa)). Residues 87 to 173 (RAAPNAPVSA…QVEGALKHTS (87 aa)) are domain II. A disordered region spans residues 140-160 (DSFDAMAEPASAPASSGRAEQ). Over residues 144 to 157 (AMAEPASAPASSGR) the composition is skewed to low complexity. The segment at 174-390 (YLNRTFTFDT…GALKRVIAHS (217 aa)) is domain III, AAA+ region. ATP is bound by residues glycine 218, glycine 220, lysine 221, and threonine 222. The domain IV, binds dsDNA stretch occupies residues 391-510 (HFMGRDITIE…YKNLLRTLTT (120 aa)).

Belongs to the DnaA family. Oligomerizes as a right-handed, spiral filament on DNA at oriC.

It is found in the cytoplasm. In terms of biological role, plays an essential role in the initiation and regulation of chromosomal replication. ATP-DnaA binds to the origin of replication (oriC) to initiate formation of the DNA replication initiation complex once per cell cycle. Binds the DnaA box (a 9 base pair repeat at the origin) and separates the double-stranded (ds)DNA. Forms a right-handed helical filament on oriC DNA; dsDNA binds to the exterior of the filament while single-stranded (ss)DNA is stabiized in the filament's interior. The ATP-DnaA-oriC complex binds and stabilizes one strand of the AT-rich DNA unwinding element (DUE), permitting loading of DNA polymerase. After initiation quickly degrades to an ADP-DnaA complex that is not apt for DNA replication. Binds acidic phospholipids. This chain is Chromosomal replication initiator protein DnaA, found in Pseudomonas putida (strain GB-1).